Consider the following 525-residue polypeptide: Cysteine--tRNA ligase (525 aa).

Residue cysteine 49 participates in Zn(2+) binding. The 'HIGH' region signature appears at 51–61; that stretch reads VTVYDLCHLGH. Residues cysteine 258, histidine 283, and glutamate 287 each coordinate Zn(2+). The 'KMSKS' region motif lies at 315-319; it reads KMSKS. Residue lysine 318 participates in ATP binding.

It belongs to the class-I aminoacyl-tRNA synthetase family. As to quaternary structure, monomer. The cofactor is Zn(2+).

The protein localises to the cytoplasm. The catalysed reaction is tRNA(Cys) + L-cysteine + ATP = L-cysteinyl-tRNA(Cys) + AMP + diphosphate. The protein is Cysteine--tRNA ligase of Synechococcus sp. (strain JA-2-3B'a(2-13)) (Cyanobacteria bacterium Yellowstone B-Prime).